A 398-amino-acid chain; its full sequence is O-methyltransferase mpaG' (398 aa).

Residue S144 participates in (4E,8E)-10-(4,6-dihydroxy-7-methyl-3-oxo-1,3-dihydro-2-benzofuran-5-yl)-4,8-dimethyldeca-4,8-dienoate binding. S144 contacts 4-farnesyl-3,5-dihydroxy-6-methylphthalide. A 6-O-desmethylmycophenolate-binding site is contributed by S144. N197 provides a ligand contact to S-adenosyl-L-homocysteine. Y199 lines the (4E,8E)-10-(4,6-dihydroxy-7-methyl-3-oxo-1,3-dihydro-2-benzofuran-5-yl)-4,8-dimethyldeca-4,8-dienoate pocket. Y199 contacts 4-farnesyl-3,5-dihydroxy-6-methylphthalide. Y199 lines the 6-O-desmethylmycophenolate pocket. Y203, D237, G239, H244, D245, D264, and R265 together coordinate S-adenosyl-L-homocysteine. D264 lines the S-adenosyl-L-methionine pocket. (4E,8E)-10-(4,6-dihydroxy-7-methyl-3-oxo-1,3-dihydro-2-benzofuran-5-yl)-4,8-dimethyldeca-4,8-dienoate is bound by residues R265 and Q267. A 6-O-desmethylmycophenolate-binding site is contributed by R265. S-adenosyl-L-homocysteine-binding residues include D286, I287, and H302. S303 contacts (4E,8E)-10-(4,6-dihydroxy-7-methyl-3-oxo-1,3-dihydro-2-benzofuran-5-yl)-4,8-dimethyldeca-4,8-dienoate. Residue S303 participates in 4-farnesyl-3,5-dihydroxy-6-methylphthalide binding. S303 lines the 6-O-desmethylmycophenolate pocket. The active-site Proton acceptor is H306. Catalysis depends on residues E335 and E362.

The protein belongs to the class I-like SAM-binding methyltransferase superfamily. Cation-independent O-methyltransferase family. As to quaternary structure, homodimer.

The protein localises to the cytoplasm. Its subcellular location is the cytosol. The catalysed reaction is (4E,8E)-10-(4,6-dihydroxy-7-methyl-3-oxo-1,3-dihydro-2-benzofuran-5-yl)-4,8-dimethyldeca-4,8-dienoate + S-adenosyl-L-methionine = (4E,8E)-10-(4-hydroxy-6-methoxy-7-methyl-3-oxo-1,3-dihydro-2-benzofuran-5-yl)-4,8-dimethyldeca-4,8-dienoate + S-adenosyl-L-homocysteine + H(+). It catalyses the reaction 4-farnesyl-3,5-dihydroxy-6-methylphthalide + S-adenosyl-L-methionine = 4-farnesyl-3,5-dihydroxy-6-methoxylphthalide + S-adenosyl-L-homocysteine + H(+). The enzyme catalyses 6-O-desmethylmycophenolate + S-adenosyl-L-methionine = mycophenolate + S-adenosyl-L-homocysteine + H(+). The protein operates within secondary metabolite biosynthesis; terpenoid biosynthesis. In terms of biological role, O-methyltransferase; part of the gene cluster that mediates the biosynthesis of mycophenolic acid (MPA), the first isolated antibiotic natural product in the world obtained from a culture of Penicillium brevicompactum in 1893. MpaG' catalyzes the 5-O-methylation of three precursors in MPA biosynthesis including demethylmycophenolic acid (DMMPA), 4-farnesyl-3,5-dihydroxy-6-methylphthalide (FDHMP), and an intermediate containing three fewer carbon atoms compared to FDHMP (FDHMP-3C) with different catalytic efficiencies. The first step of the pathway is the synthesis of 5-methylorsellinic acid (5MOA) by the cytosolic polyketide synthase mpaC. 5MOA is then converted to the phthalide compound 5,7-dihydroxy-4,6-dimethylphthalide (DHMP) by the endoplasmic reticulum-bound cytochrome P450 monooxygenase mpaDE. MpaDE first catalyzes hydroxylation of 5-MOA to 4,6-dihydroxy-2-(hydroxymethyl)-3-methylbenzoic acid (DHMB). MpaDE then acts as a lactone synthase that catalyzes the ring closure to convert DHMB into DHMP. The next step is the prenylation of DHMP by the Golgi apparatus-associated prenyltransferase mpaA to yield farnesyl-DHMP (FDHMP). The ER-bound oxygenase mpaB then mediates the oxidative cleavage the C19-C20 double bond in FDHMP to yield FDHMP-3C via a mycophenolic aldehyde intermediate. The O-methyltransferase mpaG catalyzes the methylation of FDHMP-3C to yield MFDHMP-3C. MpaG and mpaB can also switch the order in which they act and, in this case, the conversion of FDHMP to MFDHMP-3C can take place via 5-O-methyl-FDHMP (MFDHMP). After the cytosolic methylation of FDHMP-3C, MFDHMP-3C enters into peroxisomes probably via free diffusion due to its low molecular weight. Upon a peroxisomal CoA ligation reaction, catalyzed by a beta-oxidation component enzyme acyl-CoA ligase ACL891, MFDHMP-3C-CoA would then be restricted to peroxisomes for the following beta-oxidation pathway steps. The peroxisomal beta-oxidation machinery than converts MFDHMP-3C-CoA into MPA_CoA, via a beta-oxidation chain-shortening process. Finally mpaH acts as a peroxisomal acyl-CoA hydrolase with high substrate specificity toward MPA-CoA to release the final product MPA. MpaH can also hydrolyze DMMPA-CoA to release demethylmycophenolic acid (DMMPA) that is further converted to MPA by mpaG. This Penicillium brevicompactum protein is O-methyltransferase mpaG'.